A 441-amino-acid polypeptide reads, in one-letter code: 23S rRNA (uracil(1939)-C(5))-methyltransferase RlmD (441 aa).

A TRAM domain is found at Met-1–Glu-56. [4Fe-4S] cluster is bound by residues Cys-69, Cys-75, Cys-78, and Cys-157. Positions 265, 294, 299, 315, 343, and 364 each coordinate S-adenosyl-L-methionine. Cys-397 serves as the catalytic Nucleophile.

Belongs to the class I-like SAM-binding methyltransferase superfamily. RNA M5U methyltransferase family. RlmD subfamily.

The enzyme catalyses uridine(1939) in 23S rRNA + S-adenosyl-L-methionine = 5-methyluridine(1939) in 23S rRNA + S-adenosyl-L-homocysteine + H(+). Its function is as follows. Catalyzes the formation of 5-methyl-uridine at position 1939 (m5U1939) in 23S rRNA. This chain is 23S rRNA (uracil(1939)-C(5))-methyltransferase RlmD, found in Cupriavidus necator (strain ATCC 17699 / DSM 428 / KCTC 22496 / NCIMB 10442 / H16 / Stanier 337) (Ralstonia eutropha).